A 48-amino-acid chain; its full sequence is Protein YodE (48 aa).

This is Protein YodE from Escherichia coli (strain K12).